The sequence spans 108 residues: Heme-degrading monooxygenase HmoA (108 aa).

The region spanning 2–95 is the ABM domain; the sequence is FVQLRKMTVK…DYLISTEVSM (94 aa). His-76 is a heme binding site.

The protein belongs to the antibiotic biosynthesis monooxygenase family. Homodimer.

It is found in the cytoplasm. It carries out the reaction heme b + 3 reduced [NADPH--hemoprotein reductase] + 3 O2 = biliverdin IXalpha + CO + Fe(2+) + 3 oxidized [NADPH--hemoprotein reductase] + 3 H2O + H(+). Functionally, allows bacterial pathogens to use the host heme as an iron source. Catalyzes the oxidative degradation of the heme macrocyclic porphyrin ring in the presence of a suitable electron donor such as ascorbate or NADPH--cytochrome P450 reductase, with subsequent release of free iron. In Bacillus subtilis (strain 168), this protein is Heme-degrading monooxygenase HmoA (hmoA).